The primary structure comprises 615 residues: tRNA uridine 5-carboxymethylaminomethyl modification enzyme MnmG (615 aa).

11 to 16 (GLGHAG) provides a ligand contact to FAD. 278-292 (GPRYCPSLEDKVVRF) provides a ligand contact to NAD(+).

This sequence belongs to the MnmG family. Homodimer. Heterotetramer of two MnmE and two MnmG subunits. FAD serves as cofactor.

It localises to the cytoplasm. Its function is as follows. NAD-binding protein involved in the addition of a carboxymethylaminomethyl (cmnm) group at the wobble position (U34) of certain tRNAs, forming tRNA-cmnm(5)s(2)U34. This Myxococcus xanthus (strain DK1622) protein is tRNA uridine 5-carboxymethylaminomethyl modification enzyme MnmG.